The following is an 84-amino-acid chain: MAFLKKSLFLVLFLGIVSLSVCEEEKREGEEKEEKREEEEGKEENEDGNEEHKEKRFLGAILKIGHALAKTVLPMVTNAFKPKQ.

The signal sequence occupies residues Met-1–Cys-22. Residues Glu-23–Glu-39 are compositionally biased toward basic and acidic residues. The interval Glu-23–Lys-53 is disordered. Positions Glu-23–Glu-54 are excised as a propeptide. Residues Glu-40–Asn-49 show a composition bias toward acidic residues.

Expressed by the skin glands.

The protein resides in the secreted. In terms of biological role, antimicrobial peptide that displays antibacterial, antiprotozoal, and antiviral activity. Exhibits antibacterial activity against the Gram-positive bacteria S.epidermidis ATCC 12228 (MIC=4 uM), E.casseliflavus ATCC 700327 (MIC=4 uM), S.aureus ATCC 25923 (MIC=8 uM) and E.faecalis ATCC 29212 (MIC=8 uM), and the Gram-negative bacteria E.coli ATCC 25922 (MIC=8 uM), K.pneumoniae ATCC 13883 (MIC=8 uM), the multi-resistant clinical isolate strain K.pneumoniae carbapanemase (KPC) MR (MIC=16 uM), and P.aeruginosa ATCC 27853 (MIC=32 uM). Displays antiprotozoal activity against the epimastigote form of T.cruzi (IC(50)=6.32 uM). Does not show antimicrobial against the fungi C.albicans ATCC 90028 and C.parapsilosis ATCC 22019. Displays antiviral activity against the human viruses chikungunya (EC(50)=17.9 uM), Dengue serotype 4 (EC(50)=20.8 uM) and Yellow Fever (EC(50)=21.8 uM). Shows moderate cytolytic activity against human erythrocytes (HC(50)=48.9 uM), and activates the oxidative burst in human neutrophils. Also displays anti-proliferative effects against MCF-7 breast cancer cells (IC(50)=15.3 uM) and B16F10 murine melanoma cells (IC(50)=12.8 uM). This chain is Figainin 2, found in Boana raniceps (Chaco tree frog).